Consider the following 223-residue polypeptide: Keratin-associated protein 5-4 (223 aa).

14 repeat units span residues 21-24, 27-30, 79-82, 89-92, 107-110, 117-120, 135-138, 145-148, 155-158, 173-176, 183-186, 193-196, 203-206, and 213-216. The 14 X 4 AA repeats of C-C-X-P stretch occupies residues 21–216; it reads CCKPVCCCVP…CCCQSSCCAP (196 aa).

Belongs to the KRTAP type 5 family. Interacts with hair keratins. As to expression, expressed during the active phases of the hair cycle in the medulla and the inner root sheath of the forming hair. Also expressed in the upper layers of the epidermis of skin.

Functionally, in the hair cortex, hair keratin intermediate filaments are embedded in an interfilamentous matrix, consisting of hair keratin-associated protein (KRTAP), which are essential for the formation of a rigid and resistant hair shaft through their extensive disulfide bond cross-linking with abundant cysteine residues of hair keratins. The matrix proteins include the high-sulfur and high-glycine-tyrosine keratins. The protein is Keratin-associated protein 5-4 of Mus musculus (Mouse).